Reading from the N-terminus, the 330-residue chain is AH receptor-interacting protein (330 aa).

In terms of domain architecture, PPIase FKBP-type spans 31–121 (GTKATFHFRT…KDPLEGQRHC (91 aa)). Ser43 is modified (phosphoserine). TPR repeat units lie at residues 179-212 (VPVIHQEGNRLYREGQVKEAAAKYYDAIACLKNL), 231-264 (TPLLLNYCQCKLVAQEYYEVLDHCSSILNKYDDN), and 265-298 (VKAYFKRGKAHAAVWNAQEAQADFAKVLELDPAL).

In terms of assembly, interacts with RET in the pituitary gland; this interaction prevents the formation of the AIP-survivin complex.

The protein localises to the cytoplasm. In terms of biological role, may play a positive role in AHR-mediated (aromatic hydrocarbon receptor) signaling, possibly by influencing its receptivity for ligand and/or its nuclear targeting. In Mus musculus (Mouse), this protein is AH receptor-interacting protein (Aip).